Consider the following 240-residue polypeptide: MVKLVLIRHGQSEWNVENRFTGWTDVDLSSKGLEEAREAGVMLKASGFSFDIAYTSVLRRAMRTLWITLEEMDLMWIPVYKTWKLNERHYGALQGLNKEETARKYGDEQVTLWRRSTNVRPPALTKDDERYEAAHPKYRDIKDYEFPLTEDLEDTEKRVVSYWNEEIAPNVKAGKQVIIAAHGNTIRALVKHLDQISDKDIENVNIPTGTPLVYELDNDLKPIGHYYLNREIETLEEKQV.

Residues 8-15 (RHGQSEWN), 21-22 (TG), R60, 87-90 (ERHY), K98, 114-115 (RR), and 183-184 (GN) contribute to the substrate site. H9 acts as the Tele-phosphohistidine intermediate in catalysis. Catalysis depends on E87, which acts as the Proton donor/acceptor.

It belongs to the phosphoglycerate mutase family. BPG-dependent PGAM subfamily.

It carries out the reaction (2R)-2-phosphoglycerate = (2R)-3-phosphoglycerate. Its pathway is carbohydrate degradation; glycolysis; pyruvate from D-glyceraldehyde 3-phosphate: step 3/5. In terms of biological role, catalyzes the interconversion of 2-phosphoglycerate and 3-phosphoglycerate. In Bacillus cereus (strain ATCC 10987 / NRS 248), this protein is 2,3-bisphosphoglycerate-dependent phosphoglycerate mutase 2.